The sequence spans 187 residues: Peptidyl-tRNA hydrolase (187 aa).

Residue Tyr15 coordinates tRNA. The active-site Proton acceptor is His20. TRNA-binding residues include Phe65, Asn67, and Asn113.

The protein belongs to the PTH family. Monomer.

Its subcellular location is the cytoplasm. The enzyme catalyses an N-acyl-L-alpha-aminoacyl-tRNA + H2O = an N-acyl-L-amino acid + a tRNA + H(+). Hydrolyzes ribosome-free peptidyl-tRNAs (with 1 or more amino acids incorporated), which drop off the ribosome during protein synthesis, or as a result of ribosome stalling. In terms of biological role, catalyzes the release of premature peptidyl moieties from peptidyl-tRNA molecules trapped in stalled 50S ribosomal subunits, and thus maintains levels of free tRNAs and 50S ribosomes. This is Peptidyl-tRNA hydrolase from Methylococcus capsulatus (strain ATCC 33009 / NCIMB 11132 / Bath).